Here is a 90-residue protein sequence, read N- to C-terminus: Conotoxin Ca8.2 (90 aa).

A signal peptide spans Met-1–Gln-21. Positions Gln-22 to Arg-46 are excised as a propeptide. Position 89 is a glutamine amide (Gln-89).

Belongs to the conotoxin S superfamily. Contains 5 disulfide bonds. In terms of tissue distribution, expressed by the venom duct.

The protein localises to the secreted. The sequence is that of Conotoxin Ca8.2 from Conus caracteristicus (Characteristic cone).